Reading from the N-terminus, the 307-residue chain is MAAQDKYKFVFTAKEAASEGVTEPIRLPKLIRKAMSLARGPISKYKVGAVGRASSGRVYLGVNVEFPGLPLHHSIHPEQFLVTNLALNSEKGLRQLAVAISSDCIEFGAPCGNCRQFLMETSNELDIKILLKSKHEAEGSFSSLKLLLPYRFTPDDVLPKGSPLLLEKRDNCLTLSGSTEEICSSDCSHLKCKALAAANNSFSPYTESPSGVALQDDEGKWYRGWYIESVAYSPSLGPVQAALVDFVARSRGKGFNKIVEAVLVEKNNARVSQERTAKMILDTIAAPNCDFKVFHCYVDLQKKFITE.

CMP/dCMP-type deaminase domains lie at 22 to 155 (TEPI…FTPD) and 185 to 307 (SDCS…FITE). 63 to 65 (NVE) serves as a coordination point for substrate. Zn(2+) is bound at residue His-76. Catalysis depends on Glu-78, which acts as the Proton donor. Cys-111 and Cys-114 together coordinate Zn(2+).

Belongs to the cytidine and deoxycytidylate deaminase family. As to quaternary structure, homodimer. It depends on Zn(2+) as a cofactor.

The enzyme catalyses cytidine + H2O + H(+) = uridine + NH4(+). The catalysed reaction is 2'-deoxycytidine + H2O + H(+) = 2'-deoxyuridine + NH4(+). In terms of biological role, this enzyme scavenges exogenous and endogenous cytidine and 2'-deoxycytidine for UMP synthesis. This Arabidopsis thaliana (Mouse-ear cress) protein is Cytidine deaminase 7 (CDA7).